A 238-amino-acid chain; its full sequence is Orotate phosphoribosyltransferase (238 aa).

5-phospho-alpha-D-ribose 1-diphosphate is bound at residue Lys-29. 37–38 serves as a coordination point for orotate; that stretch reads FF. 5-phospho-alpha-D-ribose 1-diphosphate contacts are provided by residues 87 to 88, Arg-118, Lys-119, Lys-122, His-124, and 144 to 152; these read YK and DDVITAGTA. 2 residues coordinate orotate: Thr-148 and Arg-176.

This sequence belongs to the purine/pyrimidine phosphoribosyltransferase family. PyrE subfamily. As to quaternary structure, homodimer.

The enzyme catalyses orotidine 5'-phosphate + diphosphate = orotate + 5-phospho-alpha-D-ribose 1-diphosphate. The protein operates within pyrimidine metabolism; UMP biosynthesis via de novo pathway; UMP from orotate: step 1/2. In terms of biological role, catalyzes the transfer of a ribosyl phosphate group from 5-phosphoribose 1-diphosphate to orotate, leading to the formation of orotidine monophosphate (OMP). The chain is Orotate phosphoribosyltransferase (URA5) from Coccidioides immitis (strain RS) (Valley fever fungus).